The sequence spans 413 residues: MLIALELSTIWTIALPPITGAIIGYFTNDIAIKMLFRPYKARYIFKRRLPFTPGLIPRNQERLAKRVSDTIMGSLLTPEEIQNLARRLLKTERVQSAILWLLQLAIKQIRADKEQKTAKILAGILSDLFGQSLPRLLKVLARRDDFLEAQINQIFDRILLEFRLTDLQARQLADWLLDTVISPDILRQLLIDFLTDRNIQVIDEGFREKTSGTYWVVANIFGLRNTLTRLRTFCLDEKETANTRLKELLLSLEMRTRLREWLQNLSLQNLPISTVRQLRKTTRDTVRSYIQQSGAQFLQDFNQSIDWEKLAIVVVNRLQASTVVTDSLEMISQELALILERYLEEDLERIVSQAIPILSIDQIIIEKIVATSPKELEAATEGIVKNELQAIVNLGGILGFFVGTIQTVILLLR.

The next 2 membrane-spanning stretches (helical) occupy residues 3–23 and 391–411; these read IALELSTIWTIALPPITGAII and IVNLGGILGFFVGTIQTVILL.

It belongs to the UPF0754 family.

The protein localises to the cell inner membrane. This chain is UPF0754 membrane protein PCC7424_0748, found in Gloeothece citriformis (strain PCC 7424) (Cyanothece sp. (strain PCC 7424)).